Reading from the N-terminus, the 452-residue chain is MRLSRYFLPVLKETPAEAQIVSHRLMLRAGMIKQASAGIYSWLPLGYKVLKRIERIVHEEQIRAGHIPMLMPTLQSADLWQKSGRFDAYGPEMLRLKDRHDRDMLYGPTNEEMITDMVGTFVTSYKSLPLTLYHIQWKFRDEVRPRFGVMRGREFLMKDGYNFDLTKEAALHAYNRHLVSYLRTYERMGLQAIPMRADSGPIGGDYTHEFLVLADTGESEVFYDAEITDLKFGDREIDYDDVAQCDAVLQEFTSRYARTDETHDEAEFAAIPGDRQRSARGIEVGQIFYFGTEYSEKLGAHVQNDEGERVPLHMGSHGIGVSRLLGAIIEASHDDKGIIWPEGVTPFHCGIVNLKQGDAEADAACEALETALENAGLEPLYDDRNERAGGKFATMDLIGLPWRITVGPRGLKNGVVELTSRRTGESEELTPDAAVARVAEVYAAHKPVNAAV.

It belongs to the class-II aminoacyl-tRNA synthetase family. ProS type 2 subfamily. In terms of assembly, homodimer.

Its subcellular location is the cytoplasm. The catalysed reaction is tRNA(Pro) + L-proline + ATP = L-prolyl-tRNA(Pro) + AMP + diphosphate. Its function is as follows. Catalyzes the attachment of proline to tRNA(Pro) in a two-step reaction: proline is first activated by ATP to form Pro-AMP and then transferred to the acceptor end of tRNA(Pro). This chain is Proline--tRNA ligase, found in Jannaschia sp. (strain CCS1).